Here is an 843-residue protein sequence, read N- to C-terminus: MTSDTIRQTLDELLLDKNGGSSNEARAFFLSQIIDQLKLISSQTDAERQLQKLQLKDPNDNIVKATPPPPPPPPPLISILQQAPPPPPPPPPPTLKAPPPPPILGLKTPSKSLKTPTPRPKECPTSFLPKKEKKTKTRTVQWSKINASVVQDDSVWGKLAKASNVDIDFDLLDNFFGIESLAVSGAAEVVKKSTRKDAHVELLTAKRSQNVAIMLKQFKNIDELIDDVSQNKPVAEIDALQNLFGMLPQSEEEEALRRYTGDISLLSPPSSFFYRLVQIQFYRLRIETQIFLSDFSRLMRELAPNVEILIRTSQEILTSPTLPRLLLIFVNMGNYLNGNNSQGNAFGFTLNSLWKLIDLKGNKQEFSLLHLLVTCEPDLVAHLQEELSTLKDASQISFDEIKISLKTLRDGRCKLEKQLETCSGASFTQFLELIKIDCKFELDEFGANYDKLTELQYQLADYFCENRNTFQLDECLKIFNFLMNRLQQTLKEHVTRETRKLKKEEKKETQTTRECEKTMKKPEKIDLFDALTASNGGPESPRKRAAGILDMRQKLGNVRIRKLRDVTTLESSFTPPPPPPLESPTDSTSSKENESVKPAKTSTNYEMCNDLESYITSLTRKRASHLPKAPPKEEPKLPEVLPEKSKIALKIEKIPEKIDKPPLPQAAPIIPKLPQKSIKAPSTVTTRSKVPPPTAAAAVRIVSVTTTTTPTKTAELRKPGARSPKTTVATVPKVTVVPVSRVPVAPSTPLSRRMSAPVVRKPTMTAEKKREITMKPSVSTSARPSLINTSSHPMVRSPLPKMSVLEKPKPLRITRPTVIPQSPTVTSSARPSGLRQPAKPKWV.

Disordered regions lie at residues Q54–T135, T568–T601, T748–E767, and T773–V843. Pro residues-rich tracts occupy residues T66–L76 and A83–I103. Residues F127–T512 form the FH2 domain. Polar residues-rich tracts occupy residues P776–H792 and I819–R830.

The protein belongs to the formin homology family. As to expression, expressed in the excretory cell and mostly accumulates at the tip of the excretory cell canals.

The protein localises to the cytoplasm. Its subcellular location is the cytoskeleton. Constitutively active protein required for microtubule and F-actin growth, structural maintenance and organization during excretory cell tubulogenesis. The chain is Excretory canal abnormal protein 6 from Caenorhabditis elegans.